We begin with the raw amino-acid sequence, 560 residues long: Putative transport protein VIBHAR_02636 (560 aa).

The next 5 membrane-spanning stretches (helical) occupy residues 8–28 (LLEQNPILLIFVVLAIGLAFG), 37–57 (LGNSIGVLITSLVMGHLGFSF), 66–86 (FMLFIYCVGIEAGPNFFGIFF), 91–111 (HYFILSMTVLVSAVGLTYFCS), and 164–184 (VGYAMAYLVGLISMIMFAKLL). RCK C-terminal domains follow at residues 205–292 (LGNS…FRNG) and 293–376 (KEVF…KIGF). A run of 6 helical transmembrane segments spans residues 386-406 (LLAFCSFFILGIMFGLVTMTF), 409-429 (VSFSLGNAVGLLLSGITLGFL), 450-470 (LGLMFFMVGIGLSAGGKIFEH), 478-498 (IIGLAFIVSVVPVVLAYLVGA), 505-525 (SALLFGAIIGARTCAPAMDVV), and 539-559 (AGTYAIANILMTLAGTILIIL).

This sequence belongs to the AAE transporter (TC 2.A.81) family. YbjL subfamily.

It localises to the cell membrane. The chain is Putative transport protein VIBHAR_02636 from Vibrio campbellii (strain ATCC BAA-1116).